We begin with the raw amino-acid sequence, 332 residues long: Glycerol-3-phosphate dehydrogenase [NAD(P)+] (332 aa).

Positions 11, 30, and 108 each coordinate NADPH. K108, G137, and S139 together coordinate sn-glycerol 3-phosphate. Residue A141 coordinates NADPH. Sn-glycerol 3-phosphate-binding residues include K192, D245, S255, R256, and N257. K192 acts as the Proton acceptor in catalysis. NADPH is bound at residue R256. NADPH is bound by residues V280 and E282.

Belongs to the NAD-dependent glycerol-3-phosphate dehydrogenase family.

It is found in the cytoplasm. The catalysed reaction is sn-glycerol 3-phosphate + NAD(+) = dihydroxyacetone phosphate + NADH + H(+). It catalyses the reaction sn-glycerol 3-phosphate + NADP(+) = dihydroxyacetone phosphate + NADPH + H(+). Its pathway is membrane lipid metabolism; glycerophospholipid metabolism. Functionally, catalyzes the reduction of the glycolytic intermediate dihydroxyacetone phosphate (DHAP) to sn-glycerol 3-phosphate (G3P), the key precursor for phospholipid synthesis. In Burkholderia thailandensis (strain ATCC 700388 / DSM 13276 / CCUG 48851 / CIP 106301 / E264), this protein is Glycerol-3-phosphate dehydrogenase [NAD(P)+].